Consider the following 334-residue polypeptide: Serine/Arginine-related protein 53 (334 aa).

Over residues Met-1–Arg-13 the composition is skewed to basic and acidic residues. Disordered regions lie at residues Met-1–Pro-179, Leu-201–Ala-220, and Gln-243–Thr-290. Composition is skewed to basic residues over residues Ser-14–Ser-24 and Tyr-35–Ser-50. Basic and acidic residues predominate over residues Trp-51 to Tyr-62. The span at Ser-78–Ser-118 shows a compositional bias: basic residues. Composition is skewed to basic and acidic residues over residues Arg-132–Glu-166, Leu-201–Asp-218, and Ser-247–Glu-259. The stretch at Ala-180–Glu-236 forms a coiled coil.

Interacts (via Arg/Ser-rich domain) with LUC7L3, RBM39 and RSF1. Post-translationally, phosphorylated. Widely expressed. Expressed in brain, spinal cord, cerebellum.

The protein resides in the nucleus. It is found in the nucleus speckle. The protein localises to the cytoplasm. In terms of biological role, has a role in alternative splicing and transcription regulation. Involved in both constitutive and alternative pre-mRNA splicing. May have a role in the recognition of the 3' splice site during the second step of splicing. The chain is Serine/Arginine-related protein 53 (RSRC1) from Homo sapiens (Human).